Reading from the N-terminus, the 558-residue chain is Potassium-transporting ATPase potassium-binding subunit (558 aa).

A run of 12 helical transmembrane segments spans residues 2–22 (LQGF…APLL), 66–86 (VSAA…ILMF), 135–155 (ALGF…IAFI), 177–197 (ILLP…VPET), 253–273 (LLET…YGIM), 280–300 (GWLI…IAAV), 327–347 (FGWV…CGAV), 354–374 (LMPP…IWGG), 378–398 (GTAY…LMVG), 413–433 (IVLA…PTAI), 482–502 (LSAS…LIFL), and 528–548 (GITA…ILVL).

Belongs to the KdpA family. The system is composed of three essential subunits: KdpA, KdpB and KdpC.

The protein localises to the cell inner membrane. Part of the high-affinity ATP-driven potassium transport (or Kdp) system, which catalyzes the hydrolysis of ATP coupled with the electrogenic transport of potassium into the cytoplasm. This subunit binds the periplasmic potassium ions and delivers the ions to the membrane domain of KdpB through an intramembrane tunnel. The protein is Potassium-transporting ATPase potassium-binding subunit of Synechocystis sp. (strain ATCC 27184 / PCC 6803 / Kazusa).